Consider the following 245-residue polypeptide: Ureidoacrylate amidohydrolase RutB (245 aa).

The active-site Proton acceptor is the Asp41. Lys150 is an active-site residue. Cys183 (nucleophile) is an active-site residue.

The protein belongs to the isochorismatase family. RutB subfamily.

The enzyme catalyses (Z)-3-ureidoacrylate + H2O + H(+) = (Z)-3-aminoacrylate + NH4(+) + CO2. The catalysed reaction is (Z)-3-ureidoacrylate + H2O = (Z)-3-aminoacrylate + carbamate + H(+). It carries out the reaction (Z)-2-methylureidoacrylate + H2O + H(+) = (Z)-2-methylaminoacrylate + NH4(+) + CO2. In terms of biological role, hydrolyzes ureidoacrylate to form aminoacrylate and carbamate. The carbamate hydrolyzes spontaneously, thereby releasing one of the nitrogen atoms of the pyrimidine ring as ammonia and one of its carbon atoms as CO2. This Pseudomonas syringae pv. syringae (strain B728a) protein is Ureidoacrylate amidohydrolase RutB.